A 765-amino-acid chain; its full sequence is Phosphoribosylformylglycinamidine synthase subunit PurL (765 aa).

H57 is a catalytic residue. The ATP site is built by Y60 and R104. E106 lines the Mg(2+) pocket. Residues 107 to 110 (SHNH) and R129 each bind substrate. H108 serves as the catalytic Proton acceptor. D130 is a Mg(2+) binding site. Q254 lines the substrate pocket. A Mg(2+)-binding site is contributed by D282. 326 to 328 (ESQ) contacts substrate. ATP is bound by residues N508 and G545. N546 lines the Mg(2+) pocket. Position 548 (S548) interacts with substrate.

The protein belongs to the FGAMS family. Monomer. Part of the FGAM synthase complex composed of 1 PurL, 1 PurQ and 2 PurS subunits.

It is found in the cytoplasm. The catalysed reaction is N(2)-formyl-N(1)-(5-phospho-beta-D-ribosyl)glycinamide + L-glutamine + ATP + H2O = 2-formamido-N(1)-(5-O-phospho-beta-D-ribosyl)acetamidine + L-glutamate + ADP + phosphate + H(+). Its pathway is purine metabolism; IMP biosynthesis via de novo pathway; 5-amino-1-(5-phospho-D-ribosyl)imidazole from N(2)-formyl-N(1)-(5-phospho-D-ribosyl)glycinamide: step 1/2. In terms of biological role, part of the phosphoribosylformylglycinamidine synthase complex involved in the purines biosynthetic pathway. Catalyzes the ATP-dependent conversion of formylglycinamide ribonucleotide (FGAR) and glutamine to yield formylglycinamidine ribonucleotide (FGAM) and glutamate. The FGAM synthase complex is composed of three subunits. PurQ produces an ammonia molecule by converting glutamine to glutamate. PurL transfers the ammonia molecule to FGAR to form FGAM in an ATP-dependent manner. PurS interacts with PurQ and PurL and is thought to assist in the transfer of the ammonia molecule from PurQ to PurL. This chain is Phosphoribosylformylglycinamidine synthase subunit PurL, found in Corynebacterium aurimucosum (strain ATCC 700975 / DSM 44827 / CIP 107346 / CN-1) (Corynebacterium nigricans).